A 102-amino-acid polypeptide reads, in one-letter code: Small ribosomal subunit protein uS10 (102 aa).

The protein belongs to the universal ribosomal protein uS10 family. Part of the 30S ribosomal subunit.

In terms of biological role, involved in the binding of tRNA to the ribosomes. The chain is Small ribosomal subunit protein uS10 from Syntrophotalea carbinolica (strain DSM 2380 / NBRC 103641 / GraBd1) (Pelobacter carbinolicus).